A 367-amino-acid chain; its full sequence is 3-dehydroquinate synthase (367 aa).

NAD(+) is bound by residues 69-74, 103-107, 127-128, K140, and K149; these read DGEAFK, GVIGD, and TT. Zn(2+) contacts are provided by E182, H245, and H262.

The protein belongs to the sugar phosphate cyclases superfamily. Dehydroquinate synthase family. Requires Co(2+) as cofactor. It depends on Zn(2+) as a cofactor. NAD(+) serves as cofactor.

The protein localises to the cytoplasm. It catalyses the reaction 7-phospho-2-dehydro-3-deoxy-D-arabino-heptonate = 3-dehydroquinate + phosphate. It functions in the pathway metabolic intermediate biosynthesis; chorismate biosynthesis; chorismate from D-erythrose 4-phosphate and phosphoenolpyruvate: step 2/7. Catalyzes the conversion of 3-deoxy-D-arabino-heptulosonate 7-phosphate (DAHP) to dehydroquinate (DHQ). This Ectopseudomonas mendocina (strain ymp) (Pseudomonas mendocina) protein is 3-dehydroquinate synthase.